Consider the following 541-residue polypeptide: Chaperonin GroEL 2 (541 aa).

ATP is bound by residues 29-32, 86-90, Gly413, 476-478, and Asp492; these read TLGP, DGTTT, and NAA.

The protein belongs to the chaperonin (HSP60) family. Forms a cylinder of 14 subunits composed of two heptameric rings stacked back-to-back. Interacts with the co-chaperonin GroES.

The protein localises to the secreted. It is found in the capsule. Its subcellular location is the cell surface. The protein resides in the cell wall. The enzyme catalyses ATP + H2O + a folded polypeptide = ADP + phosphate + an unfolded polypeptide.. Together with its co-chaperonin GroES, plays an essential role in assisting protein folding. The GroEL-GroES system forms a nano-cage that allows encapsulation of the non-native substrate proteins and provides a physical environment optimized to promote and accelerate protein folding. The chain is Chaperonin GroEL 2 from Mycolicibacterium paratuberculosis (strain ATCC BAA-968 / K-10) (Mycobacterium paratuberculosis).